The following is a 954-amino-acid chain: Leucine--tRNA ligase (954 aa).

The 'HIGH' region signature appears at 67 to 78 (PYPSGAGLHVGH). The short motif at 729–733 (KMGKS) is the 'KMSKS' region element. Lysine 732 provides a ligand contact to ATP.

The protein belongs to the class-I aminoacyl-tRNA synthetase family.

The protein resides in the cytoplasm. It catalyses the reaction tRNA(Leu) + L-leucine + ATP = L-leucyl-tRNA(Leu) + AMP + diphosphate. The polypeptide is Leucine--tRNA ligase (Salinispora tropica (strain ATCC BAA-916 / DSM 44818 / JCM 13857 / NBRC 105044 / CNB-440)).